The primary structure comprises 96 residues: Prokineticin Bo8 (96 aa).

The N-terminal stretch at 1–19 is a signal peptide; it reads MKCFAQIVVLLLVIAFSHG. Disulfide bonds link Cys-26–Cys-38, Cys-32–Cys-50, Cys-37–Cys-78, Cys-60–Cys-86, and Cys-80–Cys-95.

In terms of tissue distribution, expressed by the skin glands.

It is found in the secreted. In terms of biological role, potent agonist for both PKR1/PROKR1 and PKR2/PROKR2, and inducer of a potent and long-lasting hyperalgesia. Also potentiates capsaicin-induced TRPV1 current, when tested on DRG neurons. At subnanomolar concentrations, this protein both induces potent chemotaxis of macrophages and stimulates LPS-induced production of the pro-inflammatory cytokines IL-1 and IL-12. In vivo, potently stimulates the contraction of the guinea-pig gastrointestinal (GI) smooth muscle (nanomolar concentration). The sequence is that of Prokineticin Bo8 from Bombina orientalis (Oriental fire-bellied toad).